A 980-amino-acid chain; its full sequence is Ovochymase-2 (980 aa).

The N-terminal stretch at Met1–Gly21 is a signal peptide. The propeptide at Ala22–Arg49 is activation peptide. Asn39 carries N-linked (GlcNAc...) asparagine glycosylation. The Peptidase S1 1 domain maps to Ile50–Asn299. A disulfide bond links Cys75 and Cys91. The active-site Charge relay system is the His90. Ca(2+) is bound by residues Val112 and Glu117. Asp140 functions as the Charge relay system in the catalytic mechanism. 11 cysteine pairs are disulfide-bonded: Cys174–Cys244, Cys205–Cys223, Cys234–Cys263, Cys312–Cys342, Cys369–Cys388, Cys435–Cys462, Cys489–Cys510, Cys618–Cys634, Cys716–Cys779, Cys744–Cys757, and Cys769–Cys798. Catalysis depends on Ser238, which acts as the Charge relay system. 2 CUB domains span residues Cys312–Val425 and Cys435–Val547. The region spanning Ile593–Leu822 is the Peptidase S1 2 domain. A propeptide spans Ile593–Asn980 (activation peptide). A glycan (N-linked (GlcNAc...) asparagine) is linked at Asn766. Residues His835–Ser863 form a disordered region. N-linked (GlcNAc...) asparagine glycosylation is found at Asn858 and Asn932.

Belongs to the peptidase S1 family. The catalytically inactive 108 kDa form is processed both N- and C-terminally to give rise to catalytically active and inactive forms. Differentially expressed in the oviductal pars recta (PR) region.

The protein localises to the secreted. The enzyme catalyses Preferential cleavage at 371-Gly-Ser-Arg-|-Trp-374 of glycoprotein gp43 in Xenopus laevis coelemic egg envelope to yield gp41.. Mediates gamete interaction by affecting the vitelline coat. The chain is Ovochymase-2 (OVCH2) from Rhinella arenarum (Argentine common toad).